Consider the following 115-residue polypeptide: Large ribosomal subunit protein uL22 (115 aa).

It belongs to the universal ribosomal protein uL22 family. Part of the 50S ribosomal subunit.

Functionally, this protein binds specifically to 23S rRNA; its binding is stimulated by other ribosomal proteins, e.g. L4, L17, and L20. It is important during the early stages of 50S assembly. It makes multiple contacts with different domains of the 23S rRNA in the assembled 50S subunit and ribosome. Its function is as follows. The globular domain of the protein is located near the polypeptide exit tunnel on the outside of the subunit, while an extended beta-hairpin is found that lines the wall of the exit tunnel in the center of the 70S ribosome. In Endomicrobium trichonymphae, this protein is Large ribosomal subunit protein uL22.